The primary structure comprises 237 residues: Ubiquitin-conjugating enzyme E2 34 (237 aa).

The 158-residue stretch at 5-162 folds into the UBC core domain; the sequence is ACIKRLQKEY…FPEYVEKYNQ (158 aa). The active-site Glycyl thioester intermediate is Cys87. The interval 168–207 is disordered; that stretch reads QATTQLTTPESPQKSDTKVESEKTIDPTKGDSEGGLKERK. The segment covering 180 to 204 has biased composition (basic and acidic residues); that stretch reads QKSDTKVESEKTIDPTKGDSEGGLK. The helical transmembrane segment at 214–234 threads the bilayer; the sequence is LPAWIILLLVSVFGVVMALPL.

The protein belongs to the ubiquitin-conjugating enzyme family.

It localises to the membrane. The enzyme catalyses S-ubiquitinyl-[E1 ubiquitin-activating enzyme]-L-cysteine + [E2 ubiquitin-conjugating enzyme]-L-cysteine = [E1 ubiquitin-activating enzyme]-L-cysteine + S-ubiquitinyl-[E2 ubiquitin-conjugating enzyme]-L-cysteine.. The protein operates within protein modification; protein ubiquitination. Its function is as follows. Accepts the ubiquitin from the E1 complex and catalyzes its covalent attachment to other proteins. This Arabidopsis thaliana (Mouse-ear cress) protein is Ubiquitin-conjugating enzyme E2 34 (UBC34).